Consider the following 127-residue polypeptide: Small ribosomal subunit protein uS8m (127 aa).

The protein belongs to the universal ribosomal protein uS8 family.

It localises to the mitochondrion. This is Small ribosomal subunit protein uS8m (RPS8) from Acanthamoeba castellanii (Amoeba).